The sequence spans 293 residues: Probable endoribonuclease YicC (293 aa).

It belongs to the YicC/YloC family. A divalent metal cation is required as a cofactor.

Functionally, negatively modulates sporulation, probably in response to nutrient conditions. Effects expression of sporulation regulator spo0A in an indirect manner, possibly via repression of the sinRR' operon. Probably a ssRNA endonuclease. Its function is as follows. Might contribute to small RNA (sRNA) regulation. The sequence is that of Probable endoribonuclease YicC from Clostridioides difficile (strain 630) (Peptoclostridium difficile).